Reading from the N-terminus, the 129-residue chain is Small ribosomal subunit protein uS11 (129 aa).

It belongs to the universal ribosomal protein uS11 family. Part of the 30S ribosomal subunit. Interacts with proteins S7 and S18. Binds to IF-3.

Functionally, located on the platform of the 30S subunit, it bridges several disparate RNA helices of the 16S rRNA. Forms part of the Shine-Dalgarno cleft in the 70S ribosome. This Zymomonas mobilis subsp. mobilis (strain ATCC 31821 / ZM4 / CP4) protein is Small ribosomal subunit protein uS11.